Here is a 462-residue protein sequence, read N- to C-terminus: TNF receptor-associated factor family protein DDB_G0267754 (462 aa).

The segment at 24 to 62 adopts an RING-type; degenerate zinc-finger fold; it reads CCVCECLLIEALQCRNGHVACKNCFIKIVKSKKECMTCR. Residues 104-127 form a disordered region; the sequence is KNGNGNEGSSANEIEQPQQPQQQQ. 2 TRAF-type zinc fingers span residues 150–217 and 214–273; these read SHLK…SHTE and SHTE…NQLA. The MATH domain maps to 326–449; that stretch reads MFRGKWVISN…NDTLTINFSI (124 aa).

Belongs to the TNF receptor-associated factor family. A subfamily.

Its subcellular location is the cytoplasm. Functionally, probable adapter protein and signal transducer that links members of the tumor necrosis factor receptor family to different signaling pathways by association with the receptor cytoplasmic domain and kinases. This chain is TNF receptor-associated factor family protein DDB_G0267754, found in Dictyostelium discoideum (Social amoeba).